A 758-amino-acid polypeptide reads, in one-letter code: MFKIPGFGKAAANHTPPDMTNMDTRTRHLKVSNCPNNSYALANVAAVSPNDFPNNIYIIIDNLFVFTTRHSNDIPPGTIGFNGNQRTWGGWSLNQDVQAKAFDLFKYSGKQSYLGSIDIDISFRARGKAVSTVFDQDELAKQFVRCYESQIFSPTQYLIMEFQGHFFDLKIRNVQAIDLGDIEPTSAVATGIETKGILTKQTQINFFKGRDGLVNLKSSNSLRPRSNAVIRPDFKFEDLGVGGLDKEFTKIFRRAFASRIFPPSVIEKLGISHVKGLLLYGPPGTGKTLIARKIGTMLNAKEPKIVNGPEILSKYVGSSEENIRNLFKDAEAEYRAKGEESSLHIIIFDELDSVFKQRGSRGDGTGVGDNVVNQLLAKMDGVDQLNNILVIGMTNRKDLIDSALLRPGRFEVQVEIHLPDEKGRLQIFDIQTKKMRENNMMSDDVNLAELAALTKNFSGAEIEGLVKSASSFAINKTVNIGKGATKLNTKDIAKLKVTREDFLNALNDVTPAFGISEEDLKTCVEGGMMLYSERVNSILKNGARYVRQVRESDKSRLVSLLIHGPAGSGKTALAAEIALKSGFPFIRLISPNELSGMSESAKIAYIDNTFRDAYKSPLNILVIDSLETLVDWVPIGPRFSNNILQMLKVALKRKPPQDRRLLIMTTTSAYSVLQQMDILSCFDNEIAVPNMTNLDELNNVMIESNFLDDAGRVKVINELSRSCPNFNVGIKKTLTNIETARHDEDPVNELVELMTQSA.

Ser-226 carries the post-translational modification Phosphoserine. ATP is bound by residues 281-288 and 564-571; these read GPPGTGKT and GPAGSGKT.

This sequence belongs to the AAA ATPase family. In terms of assembly, homohexamer. Binds to SEC17.

It is found in the cytoplasm. Its function is as follows. Required for vesicle-mediated transport. Catalyzes the fusion of transport vesicles within the Golgi cisternae. Is also required for transport from the endoplasmic reticulum to the Golgi stack. Seems to function as a fusion protein required for the delivery of cargo proteins to all compartments of the Golgi stack independent of vesicle origin. The sequence is that of Vesicular-fusion protein SEC18 (SEC18) from Saccharomyces cerevisiae (strain ATCC 204508 / S288c) (Baker's yeast).